Reading from the N-terminus, the 126-residue chain is MSFAILGFIALGGAVGACARFLVSEICVTLFGRGFPIGTLTVNVVGSFIMGVLIACVENEWLSPYPWKQVIGLGFLGALTTFSTFSMDNVLLMQQGAFFKMGANVLLNVILSISAAWIGFHWLMKS.

The next 4 membrane-spanning stretches (helical) occupy residues 3 to 23 (FAIL…RFLV), 37 to 57 (IGTL…IACV), 70 to 90 (VIGL…MDNV), and 104 to 124 (NVLL…HWLM). Residues G77 and T80 each contribute to the Na(+) site.

It belongs to the fluoride channel Fluc/FEX (TC 1.A.43) family.

It is found in the cell inner membrane. The enzyme catalyses fluoride(in) = fluoride(out). With respect to regulation, na(+) is not transported, but it plays an essential structural role and its presence is essential for fluoride channel function. Fluoride-specific ion channel. Important for reducing fluoride concentration in the cell, thus reducing its toxicity. The protein is Fluoride-specific ion channel FluC of Vibrio cholerae serotype O1 (strain ATCC 39541 / Classical Ogawa 395 / O395).